Reading from the N-terminus, the 276-residue chain is Borealin (276 aa).

The segment at 111 to 158 is disordered; it reads KEAKSSANSEDENMAPLKSTMKKKKASKKAPSTSKKPRTLSISKQGGT.

The protein belongs to the borealin family. In terms of assembly, component of the CPC complex.

The protein resides in the nucleus. Its subcellular location is the chromosome. It is found in the centromere. The protein localises to the cytoplasm. It localises to the cytoskeleton. The protein resides in the spindle. Functionally, component of the chromosomal passenger complex (CPC), a complex that acts as a key regulator of mitosis. The CPC complex has essential functions at the centromere in ensuring correct chromosome alignment and segregation and is required for chromatin-induced microtubule stabilization and spindle assembly. The polypeptide is Borealin (cdca8) (Danio rerio (Zebrafish)).